A 290-amino-acid polypeptide reads, in one-letter code: Xylanase inhibitor protein 2 (290 aa).

The N-terminal stretch at Met-1–Ala-27 is a signal peptide. The GH18 domain maps to Pro-30–Gly-290. Residues Cys-49 and Cys-89 are joined by a disulfide bond. An N-linked (GlcNAc...) asparagine glycan is attached at Asn-112. A disulfide bridge connects residues Cys-187 and Cys-216. A glycan (N-linked (GlcNAc...) asparagine) is linked at Asn-285.

Belongs to the glycosyl hydrolase 18 family. Xylanase inhibitor subfamily. In terms of assembly, binds to fungal GH10 xylanases.

It is found in the secreted. Fungal xylanase inhibitor. Possesses competitive inhibiting activity against several fungal endo-1,4-beta-D-xylanases belonging to glycoside hydrolase family 10 (GH10) and family 11 (GH11). May function in plant defense against secreted fungal pathogen xylanases. Is similar to class III chitinases, but does not exhibit chitinase activity. This Oryza sativa subsp. japonica (Rice) protein is Xylanase inhibitor protein 2.